The primary structure comprises 246 residues: Probable transcriptional regulatory protein YebC (246 aa).

Residues 1-20 are disordered; the sequence is MAGHSKWANTRHRKAAQDAK.

It belongs to the TACO1 family.

It is found in the cytoplasm. The protein is Probable transcriptional regulatory protein YebC of Escherichia coli O6:K15:H31 (strain 536 / UPEC).